The sequence spans 785 residues: Ribosome biogenesis protein BOP1 homolog (785 aa).

The segment covering 1–11 (MTKKLTIKRKV) has biased composition (basic residues). Positions 1 to 160 (MTKKLTIKRK…DSDTSDEEDI (160 aa)) are disordered. 3 stretches are compositionally biased toward acidic residues: residues 45–54 (EDSTDDEGID), 61–73 (SSED…DEEG), and 85–102 (SGDD…EDDA). Residues 103–112 (DAKKSSKNND) are compositionally biased toward basic and acidic residues. A compositionally biased stretch (acidic residues) spans 150–159 (ADSDTSDEED). 7 WD repeats span residues 446–487 (GHTD…RTIE), 489–527 (EDVV…KLLV), 571–613 (THFK…SQIP), 616–654 (KSKG…LIKK), 657–696 (TNSK…KPYQ), 700–739 (LHRN…DLLQ), and 755–785 (REEF…RLFT).

This sequence belongs to the WD repeat BOP1/ERB1 family.

Its subcellular location is the nucleus. It localises to the nucleolus. It is found in the nucleoplasm. Functionally, required for maturation of ribosomal RNAs and formation of the large ribosomal subunit. This chain is Ribosome biogenesis protein BOP1 homolog, found in Drosophila persimilis (Fruit fly).